The sequence spans 775 residues: Dipeptidyl peptidase 4 (775 aa).

Positions 1-15 (MKFLSLLLLVGVAQA) are cleaved as a signal peptide. Asparagine 81, asparagine 111, and asparagine 219 each carry an N-linked (GlcNAc...) asparagine glycan. Catalysis depends on charge relay system residues serine 613, aspartate 690, and histidine 725. Residue asparagine 731 is glycosylated (N-linked (GlcNAc...) asparagine).

It belongs to the peptidase S9B family.

It localises to the secreted. It carries out the reaction Release of an N-terminal dipeptide, Xaa-Yaa-|-Zaa-, from a polypeptide, preferentially when Yaa is Pro, provided Zaa is neither Pro nor hydroxyproline.. Its function is as follows. Extracellular dipeptidyl-peptidase which removes N-terminal dipeptides sequentially from polypeptides having unsubstituted N-termini provided that the penultimate residue is proline. Contributes to pathogenicity. The polypeptide is Dipeptidyl peptidase 4 (DPP4) (Arthroderma otae (strain ATCC MYA-4605 / CBS 113480) (Microsporum canis)).